A 362-amino-acid polypeptide reads, in one-letter code: Histidine protein methyltransferase 1 homolog (362 aa).

A disordered region spans residues lysine 28–proline 89. Residues serine 55–aspartate 73 show a composition bias toward polar residues. Phosphoserine occurs at positions 62 and 67. Histidine 144 carries the post-translational modification Tele-methylhistidine. S-adenosyl-L-methionine-binding positions include isoleucine 158 to threonine 162, glycine 185, and glutamine 206 to tyrosine 208. The Nuclear localization signal signature appears at proline 237–arginine 243. Residues glycine 259–tryptophan 261 and serine 283 contribute to the S-adenosyl-L-methionine site.

The protein belongs to the methyltransferase superfamily. METTL18 family. In terms of assembly, interacts with GRWD1 and members of the heat shock protein 90 and 70 families; these proteins may possibly be methylation substrates for the enzyme. In terms of processing, monomethylated at His-144 through automethylation. Automethylation at His-144 positively regulates the methyltransferase activity toward RPL3. Probably methylated on other residues.

The protein resides in the cytoplasm. It is found in the cytosol. Its subcellular location is the nucleus. The protein localises to the nucleolus. The catalysed reaction is L-histidyl-[protein] + S-adenosyl-L-methionine = N(tele)-methyl-L-histidyl-[protein] + S-adenosyl-L-homocysteine + H(+). Functionally, protein-L-histidine N-tele-methyltransferase that specifically monomethylates RPL3, thereby regulating translation elongation. Histidine methylation of RPL3 regulates translation elongation by slowing ribosome traversal on tyrosine codons: slower elongation provides enough time for proper folding of synthesized proteins and prevents cellular aggregation of tyrosine-rich proteins. The sequence is that of Histidine protein methyltransferase 1 homolog from Rattus norvegicus (Rat).